A 190-amino-acid chain; its full sequence is RNA pyrophosphohydrolase (190 aa).

One can recognise a Nudix hydrolase domain in the interval 6–149 (GYRPNVGIIL…KRDVYTQALN (144 aa)). Positions 38 to 59 (GGIKYGESPVQAMYRELHEEVG) match the Nudix box motif. Residues 167 to 190 (QRVHGPRSTDSPSSETDGHAHIAG) form a disordered region.

Belongs to the Nudix hydrolase family. RppH subfamily. It depends on a divalent metal cation as a cofactor.

Functionally, accelerates the degradation of transcripts by removing pyrophosphate from the 5'-end of triphosphorylated RNA, leading to a more labile monophosphorylated state that can stimulate subsequent ribonuclease cleavage. The protein is RNA pyrophosphohydrolase of Bordetella pertussis (strain Tohama I / ATCC BAA-589 / NCTC 13251).